The sequence spans 139 residues: Nuclear receptor 2C2-associated protein (139 aa).

This sequence belongs to the NR2C2AP family. Interacts with NR2C2/TR4. In terms of tissue distribution, expressed in all tissues examined, with highest expression in heart, skeletal muscle and pancreas.

It is found in the nucleus. May act as a repressor of NR2C2-mediated transactivation by suppressing the binding between NR2C2/TR4 and the TR4-response element in target genes. The polypeptide is Nuclear receptor 2C2-associated protein (NR2C2AP) (Homo sapiens (Human)).